The sequence spans 225 residues: Uracil-DNA glycosylase (225 aa).

D65 acts as the Proton acceptor in catalysis.

This sequence belongs to the uracil-DNA glycosylase (UDG) superfamily. UNG family.

It localises to the cytoplasm. It carries out the reaction Hydrolyzes single-stranded DNA or mismatched double-stranded DNA and polynucleotides, releasing free uracil.. Excises uracil residues from the DNA which can arise as a result of misincorporation of dUMP residues by DNA polymerase or due to deamination of cytosine. The polypeptide is Uracil-DNA glycosylase (Bacillus thuringiensis (strain Al Hakam)).